A 914-amino-acid chain; its full sequence is Protein ECT2 (914 aa).

Ala-2 carries the N-acetylalanine modification. 2 BRCT domains span residues 171 to 260 and 266 to 354; these read LYCT…AAVD and FKVP…MYLY. Thr-359 is modified (phosphothreonine; by PKC/PRKCI). Phosphoserine occurs at positions 367 and 370. Phosphothreonine; by CDK1 is present on Thr-373. Ser-376 bears the Phosphoserine mark. 2 short sequence motifs (nuclear localization signal) span residues 378-382 and 401-405; these read RKRRR and PRKRP. The interval 388 to 449 is disordered; that stretch reads AQLSRETDVS…SKSSTPVPSK (62 aa). Residues 418-429 are compositionally biased toward polar residues; sequence DISNTPESSINY. Residues 432 to 449 are compositionally biased toward low complexity; it reads TPKSCTKSSKSSTPVPSK. At Thr-444 the chain carries Phosphothreonine; by CDK1. Residues 452–641 form the DH domain; sequence ARWQVAKELY…KEVMTHINED (190 aa). Lys-611 participates in a covalent cross-link: Glycyl lysine isopeptide (Lys-Gly) (interchain with G-Cter in SUMO2). One can recognise a PH domain in the interval 675–794; it reads RVETISLGEH…KMLCRHVANT (120 aa). Residues Ser-716 and Ser-842 each carry the phosphoserine modification. A Phosphothreonine; by CDK1 modification is found at Thr-846. The interval 857–884 is disordered; it reads TSHGSVEGRSPSSNDKHVMSRLSSTSSL. A phosphoserine mark is found at Ser-861 and Ser-866.

Homodimer. Homooligomer. Found in the centralspindlin complex. Interacts with NR1I3. Interacts (Thr-359 phosphorylated form) with PARD6A; the interaction is observed in cancer cells. Interacts (Thr-359 phosphorylated form) with PRKCI; the interaction is observed in cancer cells. Interacts with PKP4; the interaction is observed at the midbody. Interacts with RACGAP1/CYK4; the interaction is direct, occurs in a microtubule-dependent manner, occurs at anaphase and during cytokinesis, is inhibited in metaphase by phosphorylation of ECT2 on Thr-373 and is stimulated in early anaphase by dephosphorylation of ECT2 probably on Thr-373 through CDK1 activity. Interacts with PLK1; the interaction is stimulated upon its phosphorylation on Thr-444. Interacts with RHOA; the interaction results in allosteric activation of ECT2. Interacts with KIF23, PARD3, PARD6B and PRKCQ. Interacts with NEDD9/HEF1. Post-translationally, phosphorylated by PLK1 in vitro. Hyperphosphorylated during the G2 phase of the cell cycle. Phosphorylation at Thr-373 occurs during the G2/M phase, relieves its auto-inhibition status and stimulates its GEF activity. Phosphorylation at Thr-444 in G2/M phase is required for subsequent binding with PLK1 and Rho exchange activation. Dephosphorylated at the time of cytokinesis. Phosphorylation at Thr-359 is required for its transformation activity in cancer cells. Expressed in lung epithelial cells (at protein level). Expressed in squamous cell carcinoma, primary non-small cell lung cancer tumors and lung adenocarcinoma.

The protein localises to the nucleus. Its subcellular location is the cytoplasm. It is found in the cytoskeleton. It localises to the spindle. The protein resides in the cleavage furrow. The protein localises to the midbody. Its subcellular location is the cell junction. It is found in the tight junction. It localises to the microtubule organizing center. The protein resides in the centrosome. Its activity is regulated as follows. Autoinhibited by the C-terminal PH domain which folds back and binds to the surface of the DH domain, blocking binding of RHOA to the catalytic center of the DH domain. The 2nd BRCT domain is also involved in inhibition, probably by helping to impede RHOA binding. Allosterically activated by binding of activated GTP-bound RHOA to the PH domain which stimulates the release of PH inhibition and promotes the binding of substrate RHOA to the catalytic center. Binding of phosphorylated RACGAP1 to the N-terminal BRCT domain-containing region also releases autoinhibition. Guanine nucleotide exchange factor (GEF) that catalyzes the exchange of GDP for GTP. Promotes guanine nucleotide exchange on the Rho family members of small GTPases, like RHOA, RHOC, RAC1 and CDC42. Required for signal transduction pathways involved in the regulation of cytokinesis. Component of the centralspindlin complex that serves as a microtubule-dependent and Rho-mediated signaling required for the myosin contractile ring formation during the cell cycle cytokinesis. Regulates the translocation of RHOA from the central spindle to the equatorial region. Plays a role in the control of mitotic spindle assembly; regulates the activation of CDC42 in metaphase for the process of spindle fibers attachment to kinetochores before chromosome congression. Involved in the regulation of epithelial cell polarity; participates in the formation of epithelial tight junctions in a polarity complex PARD3-PARD6-protein kinase PRKCQ-dependent manner. Plays a role in the regulation of neurite outgrowth. Inhibits phenobarbital (PB)-induced NR1I3 nuclear translocation. Stimulates the activity of RAC1 through its association with the oncogenic PARD6A-PRKCI complex in cancer cells, thereby acting to coordinately drive tumor cell proliferation and invasion. Also stimulates genotoxic stress-induced RHOB activity in breast cancer cells leading to their cell death. In Homo sapiens (Human), this protein is Protein ECT2.